The primary structure comprises 1386 residues: Roundabout homolog 3 (1386 aa).

An N-terminal signal peptide occupies residues 1-20 (MLRYLLKTLLQMNLFADSLA). Topologically, residues 21 to 891 (GDISNSSELL…VRLARVLREP (871 aa)) are extracellular. N-linked (GlcNAc...) asparagine glycans are attached at residues N25, N34, N41, and N53. Ig-like C2-type domains lie at 64–160 (PRIV…ASLE), 166–253 (DDFR…AEVM), 258–342 (PSFL…GSLS), 347–440 (PQLV…ALLE), and 450–531 (PPVI…GEAT). C85 and C143 are oxidised to a cystine. N-linked (GlcNAc...) asparagine glycosylation is present at N156. Intrachain disulfides connect C187–C236, C279–C326, and C368–C424. N-linked (GlcNAc...) asparagine glycosylation is found at N410, N459, and N503. C472 and C521 are joined by a disulfide. Disordered regions lie at residues 541-563 (DWGV…SQPV) and 639-662 (EPSP…EDPW). The span at 546–559 (PDPPTEPSSPPGAP) shows a compositional bias: pro residues. 3 consecutive Fibronectin type-III domains span residues 558–652 (APSQ…TQDS), 671–766 (VAVR…IPEE), and 771–869 (PPQG…SPPD). N784, N813, and N820 each carry an N-linked (GlcNAc...) asparagine glycan. Residues 892 to 912 (AFLAGSGAACGALLLGLCAAL) traverse the membrane as a helical segment. The Cytoplasmic segment spans residues 913-1386 (YWRRKQRKEL…PGQKRREEPR (474 aa)). 3 disordered regions span residues 965–989 (SWPH…NPDP), 1028–1310 (ELQT…AVPL), and 1327–1386 (SRPS…EEPR). The segment covering 1067–1083 (VKLLGKPVQMPSLNWPE) has biased composition (low complexity). Residues 1099–1112 (GPEEELEGSSEPEE) show a composition bias toward acidic residues. Residues 1158–1169 (PSPPDPPQPPTD) show a composition bias toward pro residues. Composition is skewed to low complexity over residues 1178 to 1191 (RRVP…LSVS) and 1202 to 1229 (PAGL…SAPG). S1263 carries the post-translational modification Phosphoserine. Residues 1294 to 1304 (LERERSGERKA) are compositionally biased toward basic and acidic residues. Over residues 1333–1344 (SRGQGTSTCSTA) the composition is skewed to polar residues. Residues 1345–1361 (GSNSSRGSSSSRGSRGP) show a composition bias toward low complexity.

The protein belongs to the immunoglobulin superfamily. ROBO family. As to quaternary structure, monomer. Interacts (via Fibronectin type-III 1 domain) with NELL2 (via the EGF domains) with a 3:3 stoichiometry; this interaction promotes oligomerization of ROBO3 resulting in the repulsion of commissural axons in the midline.

The protein localises to the membrane. Its function is as follows. Receptor involved in axon guidance during development. Acts as a multifunctional regulator of pathfinding that simultaneously mediates NELL2 repulsion, inhibits SLIT repulsion, and facilitates Netrin-1/NTN1 attraction. In spinal cord development plays a role in guiding commissural axons probably by preventing premature sensitivity to Slit proteins thus inhibiting Slit signaling through ROBO1/ROBO2. Binding OF NELL2 to the receptor ROBO3 promotes oligomerization of ROBO3, resulting in the repulsion of commissural axons in the midline. ROBO3 also indirectly boosts axon attraction to NTN1 without interacting with NTN1 itself. This is Roundabout homolog 3 from Homo sapiens (Human).